A 150-amino-acid chain; its full sequence is Large ribosomal subunit protein bL9 (150 aa).

This sequence belongs to the bacterial ribosomal protein bL9 family.

Binds to the 23S rRNA. The chain is Large ribosomal subunit protein bL9 from Arthrobacter sp. (strain FB24).